Here is a 538-residue protein sequence, read N- to C-terminus: NADH-quinone oxidoreductase subunit N (538 aa).

14 consecutive transmembrane segments (helical) span residues Ile-12–Leu-32, Leu-47–Ser-67, Pro-81–Ala-101, Gly-144–Phe-164, Leu-170–Leu-190, Tyr-205–Gly-225, Phe-248–Pro-268, Ile-294–Asp-314, Pro-317–Gln-337, Met-343–Asn-363, Leu-371–Val-391, Ala-423–Thr-443, Ser-472–Val-492, and Gly-502–Ala-522.

The protein belongs to the complex I subunit 2 family. NDH-1 is composed of 14 different subunits. Subunits NuoA, H, J, K, L, M, N constitute the membrane sector of the complex.

Its subcellular location is the cell membrane. The enzyme catalyses a quinone + NADH + 5 H(+)(in) = a quinol + NAD(+) + 4 H(+)(out). In terms of biological role, NDH-1 shuttles electrons from NADH, via FMN and iron-sulfur (Fe-S) centers, to quinones in the respiratory chain. The immediate electron acceptor for the enzyme in this species is believed to be a menaquinone. Couples the redox reaction to proton translocation (for every two electrons transferred, four hydrogen ions are translocated across the cytoplasmic membrane), and thus conserves the redox energy in a proton gradient. This Mycobacteroides abscessus (strain ATCC 19977 / DSM 44196 / CCUG 20993 / CIP 104536 / JCM 13569 / NCTC 13031 / TMC 1543 / L948) (Mycobacterium abscessus) protein is NADH-quinone oxidoreductase subunit N.